Reading from the N-terminus, the 314-residue chain is Methenyltetrahydromethanopterin cyclohydrolase (314 aa).

The protein belongs to the MCH family.

The protein localises to the cytoplasm. The catalysed reaction is 5,10-methenyl-5,6,7,8-tetrahydromethanopterin + H2O = N(5)-formyl-5,6,7,8-tetrahydromethanopterin + H(+). Its pathway is one-carbon metabolism; methanogenesis from CO(2); 5,10-methenyl-5,6,7,8-tetrahydromethanopterin from CO(2): step 3/3. In terms of biological role, catalyzes the reversible interconversion of 5-formyl-H(4)MPT to methenyl-H(4)MPT(+). The sequence is that of Methenyltetrahydromethanopterin cyclohydrolase from Methanoregula boonei (strain DSM 21154 / JCM 14090 / 6A8).